The chain runs to 366 residues: Aminomethyltransferase (366 aa).

It belongs to the GcvT family. The glycine cleavage system is composed of four proteins: P, T, L and H.

The enzyme catalyses N(6)-[(R)-S(8)-aminomethyldihydrolipoyl]-L-lysyl-[protein] + (6S)-5,6,7,8-tetrahydrofolate = N(6)-[(R)-dihydrolipoyl]-L-lysyl-[protein] + (6R)-5,10-methylene-5,6,7,8-tetrahydrofolate + NH4(+). The glycine cleavage system catalyzes the degradation of glycine. This is Aminomethyltransferase from Bacillus mycoides (strain KBAB4) (Bacillus weihenstephanensis).